The primary structure comprises 217 residues: MKSAVMAVACAAAPGFRGPSAFNGAALTTSAKACSAMKMSFESEIGAQAPLGFWDPLGLLADADQERFERLRYVEVKHGRIAMLAIAGHLTQQNTRLPGMLSNSANLSFADMPNGVAALSKIPPAGLAQIFAFIGFLELAVMKNVEGSFPGDFTLGGNPFGASWDAMSEETQASKRAIELNNGRAAQMGILALMVHEELNNKPYVINDLVGASYTFN.

The N-terminal 39 residues, 1–39 (MKSAVMAVACAAAPGFRGPSAFNGAALTTSAKACSAMKM), are a transit peptide targeting the chloroplast. 3 consecutive transmembrane segments (helical) span residues 81–101 (IAML…PGML), 122–142 (IPPA…LAVM), and 183–203 (GRAA…NNKP).

This sequence belongs to the fucoxanthin chlorophyll protein family. In terms of assembly, the LHC complex of chromophytic algae is composed of fucoxanthin, chlorophyll A and C bound non-covalently by fucoxanthin chlorophyll proteins (FCPs). The ratio of pigments in this LHC is; fucoxanthin: chlorophyll C: chlorophyll A; (0.6-1): (0.1-0.3): (1).

It localises to the plastid. The protein localises to the chloroplast thylakoid membrane. The light-harvesting complex (LHC) functions as a light receptor, it captures and delivers excitation energy to photosystems with which it is closely associated. Energy is transferred from the carotenoid and chlorophyll C (or B) to chlorophyll A and the photosynthetic reaction centers where it is used to synthesize ATP and reducing power. This Macrocystis pyrifera (Giant kelp) protein is Fucoxanthin-chlorophyll a-c binding protein B, chloroplastic (FCPB).